Consider the following 242-residue polypeptide: Ribonuclease 3 (242 aa).

Positions 12 to 139 (ANELLEALGT…LIGATFLEHG (128 aa)) constitute an RNase III domain. Glu-51 is a Mg(2+) binding site. The active site involves Asp-55. Mg(2+) contacts are provided by Asp-125 and Glu-128. Glu-128 is a catalytic residue. The region spanning 165–236 (LDWKTSLTVK…AEAGWKSLDS (72 aa)) is the DRBM domain.

Belongs to the ribonuclease III family. Homodimer. Mg(2+) is required as a cofactor.

It localises to the cytoplasm. It catalyses the reaction Endonucleolytic cleavage to 5'-phosphomonoester.. Functionally, digests double-stranded RNA. Involved in the processing of primary rRNA transcript to yield the immediate precursors to the large and small rRNAs (23S and 16S). Processes some mRNAs, and tRNAs when they are encoded in the rRNA operon. Processes pre-crRNA and tracrRNA of type II CRISPR loci if present in the organism. In Bifidobacterium longum (strain NCC 2705), this protein is Ribonuclease 3.